We begin with the raw amino-acid sequence, 132 residues long: Small ribosomal subunit protein eS24 (132 aa).

Residues 90–100 show a composition bias toward basic and acidic residues; the sequence is RLAKHGLYEKK. The interval 90-132 is disordered; that stretch reads RLAKHGLYEKKKTSRKQRKERKNRMKKVRGTAKANVGAGKKKD. The span at 101–119 shows a compositional bias: basic residues; sequence KTSRKQRKERKNRMKKVRG.

Belongs to the eukaryotic ribosomal protein eS24 family. In terms of assembly, component of the small ribosomal subunit. Part of the small subunit (SSU) processome, composed of more than 70 proteins and the RNA chaperone small nucleolar RNA (snoRNA) U3.

The protein resides in the cytoplasm. It localises to the nucleus. Its subcellular location is the nucleolus. In terms of biological role, component of the small ribosomal subunit. The ribosome is a large ribonucleoprotein complex responsible for the synthesis of proteins in the cell. Required for processing of pre-rRNA and maturation of 40S ribosomal subunits. Part of the small subunit (SSU) processome, first precursor of the small eukaryotic ribosomal subunit. During the assembly of the SSU processome in the nucleolus, many ribosome biogenesis factors, an RNA chaperone and ribosomal proteins associate with the nascent pre-rRNA and work in concert to generate RNA folding, modifications, rearrangements and cleavage as well as targeted degradation of pre-ribosomal RNA by the RNA exosome. In Xenopus laevis (African clawed frog), this protein is Small ribosomal subunit protein eS24 (rps24).